The following is a 235-amino-acid chain: Probable ribosomal RNA small subunit methyltransferase A (235 aa).

6 residues coordinate S-adenosyl-L-methionine: His9, Leu11, Gly34, Glu55, Asp78, and Asn93.

The protein belongs to the class I-like SAM-binding methyltransferase superfamily. rRNA adenine N(6)-methyltransferase family. RsmA subfamily.

The protein localises to the cytoplasm. Specifically dimethylates two adjacent adenosines in the loop of a conserved hairpin near the 3'-end of 16S rRNA in the 30S particle. May play a critical role in biogenesis of 30S subunits. In Pyrobaculum islandicum (strain DSM 4184 / JCM 9189 / GEO3), this protein is Probable ribosomal RNA small subunit methyltransferase A.